The primary structure comprises 214 residues: Glycoprotein Q2 (214 aa).

Residues 1–19 (MHFLVVYILIHFHAYRGMA) form the signal peptide. Residues N41, N74, N110, and N210 are each glycosylated (N-linked (GlcNAc...) asparagine; by host).

Interacts with isoform gQ1. The heterodimer gQ1-gQ2 associates with the glycoprotein complex gH-gL to form a tetrameric complex. The gH/gL/gQ1/gQ2 complex binds to human receptor CD46. Post-translationally, glycosylated by host.

Its subcellular location is the virion membrane. It localises to the host endoplasmic reticulum-Golgi intermediate compartment. Its function is as follows. Plays a role in virus entry by participating in host receptor binding at the cell surface. In Human herpesvirus 6A (strain Uganda-1102) (HHV-6 variant A), this protein is Glycoprotein Q2.